We begin with the raw amino-acid sequence, 554 residues long: MLO-like protein 14 (554 aa).

At methionine 1–glycine 13 the chain is on the extracellular side. The chain crosses the membrane as a helical span at residues leucine 14–valine 34. At glutamate 35–glutamate 63 the chain is on the cytoplasmic side. The helical transmembrane segment at leucine 64 to isoleucine 84 threads the bilayer. The Extracellular portion of the chain corresponds to cysteine 85–arginine 158. Residues phenylalanine 159–isoleucine 179 form a helical membrane-spanning segment. Over valine 180–glutamine 281 the chain is Cytoplasmic. A helical transmembrane segment spans residues lysine 282–isoleucine 302. Residue lysine 303 is a topological domain, extracellular. The chain crosses the membrane as a helical span at residues glycine 304–alanine 324. Over lysine 325 to serine 366 the chain is Cytoplasmic. Residues leucine 367–tryptophan 387 form a helical membrane-spanning segment. The Extracellular portion of the chain corresponds to glutamine 388–leucine 406. A helical transmembrane segment spans residues isoleucine 407–valine 427. Over threonine 428 to cysteine 554 the chain is Cytoplasmic. Positions glutamine 441–leucine 462 are calmodulin-binding.

Belongs to the MLO family.

The protein localises to the membrane. Its function is as follows. May be involved in modulation of pathogen defense and leaf cell death. Activity seems to be regulated by Ca(2+)-dependent calmodulin binding and seems not to require heterotrimeric G proteins. The protein is MLO-like protein 14 (MLO14) of Arabidopsis thaliana (Mouse-ear cress).